The chain runs to 485 residues: Pyruvate kinase (485 aa).

Substrate is bound at residue Arg-33. K(+) is bound by residues Asn-35, Ser-37, Asp-67, and Thr-68. 35 to 38 (NFSH) provides a ligand contact to ATP. Residues Arg-74 and Lys-155 each coordinate ATP. Glu-221 provides a ligand contact to Mg(2+). Substrate-binding residues include Gly-244, Asp-245, and Thr-277. Mg(2+) is bound at residue Asp-245.

It belongs to the pyruvate kinase family. As to quaternary structure, homotetramer. The cofactor is Mg(2+). K(+) is required as a cofactor.

The enzyme catalyses pyruvate + ATP = phosphoenolpyruvate + ADP + H(+). It functions in the pathway carbohydrate degradation; glycolysis; pyruvate from D-glyceraldehyde 3-phosphate: step 5/5. In Chlamydia trachomatis serovar L2 (strain ATCC VR-902B / DSM 19102 / 434/Bu), this protein is Pyruvate kinase (pyk).